We begin with the raw amino-acid sequence, 261 residues long: MKMTKKVLVAGFMGAMGQKAVNLVNNMSGFEVVAGLSPIAEDNPEQYHLPASAKIFKNLTEIPDNLADFWIDFTTPKAVYENVKFALQHHIRPVVGTTGMSDEQEAELIVLSKKEKVGGLIAPNFGMSAVLLMKFAKEAAKYFPDVEIIEMHHADKKDAPSGTALATAKMIAENRPEHQTAPDEVETLKNVRGGDYQGIKIHSVRLPCYIAHEQVLFGGPGEALTIRQDSFDRGSFMNGVKVALEKVDQLDELVIGLENIL.

NAD(+) is bound by residues 11–16 (GFMGAM), 96–98 (GTT), and 122–125 (APNF). His-152 serves as the catalytic Proton donor/acceptor. Position 153 (His-153) interacts with (S)-2,3,4,5-tetrahydrodipicolinate. Lys-156 functions as the Proton donor in the catalytic mechanism. 162–163 (GT) is a binding site for (S)-2,3,4,5-tetrahydrodipicolinate.

This sequence belongs to the DapB family.

It localises to the cytoplasm. The catalysed reaction is (S)-2,3,4,5-tetrahydrodipicolinate + NAD(+) + H2O = (2S,4S)-4-hydroxy-2,3,4,5-tetrahydrodipicolinate + NADH + H(+). The enzyme catalyses (S)-2,3,4,5-tetrahydrodipicolinate + NADP(+) + H2O = (2S,4S)-4-hydroxy-2,3,4,5-tetrahydrodipicolinate + NADPH + H(+). It participates in amino-acid biosynthesis; L-lysine biosynthesis via DAP pathway; (S)-tetrahydrodipicolinate from L-aspartate: step 4/4. Catalyzes the conversion of 4-hydroxy-tetrahydrodipicolinate (HTPA) to tetrahydrodipicolinate. The protein is 4-hydroxy-tetrahydrodipicolinate reductase of Lactobacillus helveticus (strain DPC 4571).